The following is a 139-amino-acid chain: MAKQAAKGSAAATKRQRGKRREKKNVPRGQAHIQSTFNNTIVTITDPAGNVICWSSAGQNGFKGSRKSTPYAAQVAAENAARKAMENGMRQVEVFVKGPGAGREAAIRSLQAAGLQVTAITDVTPIPHNGCRPPKRRRV.

The span at 1–13 (MAKQAAKGSAAAT) shows a compositional bias: low complexity. Residues 1–30 (MAKQAAKGSAAATKRQRGKRREKKNVPRGQ) form a disordered region. Over residues 14 to 23 (KRQRGKRREK) the composition is skewed to basic residues.

Belongs to the universal ribosomal protein uS11 family. As to quaternary structure, part of the 30S ribosomal subunit. Interacts with proteins S7 and S18. Binds to IF-3.

In terms of biological role, located on the platform of the 30S subunit, it bridges several disparate RNA helices of the 16S rRNA. Forms part of the Shine-Dalgarno cleft in the 70S ribosome. In Roseiflexus sp. (strain RS-1), this protein is Small ribosomal subunit protein uS11.